A 131-amino-acid chain; its full sequence is Small ribosomal subunit protein uS11 (131 aa).

This sequence belongs to the universal ribosomal protein uS11 family. In terms of assembly, part of the 30S ribosomal subunit. Interacts with proteins S7 and S18. Binds to IF-3.

Its function is as follows. Located on the platform of the 30S subunit, it bridges several disparate RNA helices of the 16S rRNA. Forms part of the Shine-Dalgarno cleft in the 70S ribosome. In Geobacter metallireducens (strain ATCC 53774 / DSM 7210 / GS-15), this protein is Small ribosomal subunit protein uS11.